A 356-amino-acid chain; its full sequence is S-adenosylmethionine:tRNA ribosyltransferase-isomerase (356 aa).

The protein belongs to the QueA family. As to quaternary structure, monomer.

Its subcellular location is the cytoplasm. It carries out the reaction 7-aminomethyl-7-carbaguanosine(34) in tRNA + S-adenosyl-L-methionine = epoxyqueuosine(34) in tRNA + adenine + L-methionine + 2 H(+). The protein operates within tRNA modification; tRNA-queuosine biosynthesis. Transfers and isomerizes the ribose moiety from AdoMet to the 7-aminomethyl group of 7-deazaguanine (preQ1-tRNA) to give epoxyqueuosine (oQ-tRNA). This Nitrosospira multiformis (strain ATCC 25196 / NCIMB 11849 / C 71) protein is S-adenosylmethionine:tRNA ribosyltransferase-isomerase.